A 277-amino-acid polypeptide reads, in one-letter code: Putative protease slr0021 (277 aa).

The active-site Nucleophile is Ser85. Lys137 (proton donor/acceptor) is an active-site residue.

This sequence belongs to the peptidase S49 family.

In Synechocystis sp. (strain ATCC 27184 / PCC 6803 / Kazusa), this protein is Putative protease slr0021.